The sequence spans 341 residues: UDP-3-O-(3-hydroxymyristoyl)glucosamine N-acyltransferase (341 aa).

The active-site Proton acceptor is the His239.

Belongs to the transferase hexapeptide repeat family. LpxD subfamily. Homotrimer.

The catalysed reaction is a UDP-3-O-[(3R)-3-hydroxyacyl]-alpha-D-glucosamine + a (3R)-hydroxyacyl-[ACP] = a UDP-2-N,3-O-bis[(3R)-3-hydroxyacyl]-alpha-D-glucosamine + holo-[ACP] + H(+). It catalyses the reaction UDP-3-O-[(3R)-3-hydroxytetradecanoyl]-alpha-D-glucosamine + (3R)-hydroxytetradecanoyl-[ACP] = UDP-2-N,3-O-bis[(3R)-3-hydroxytetradecanoyl]-alpha-D-glucosamine + holo-[ACP] + H(+). Its pathway is glycolipid biosynthesis; lipid IV(A) biosynthesis; lipid IV(A) from (3R)-3-hydroxytetradecanoyl-[acyl-carrier-protein] and UDP-N-acetyl-alpha-D-glucosamine: step 3/6. In terms of biological role, catalyzes the N-acylation of UDP-3-O-(hydroxytetradecanoyl)glucosamine using 3-hydroxytetradecanoyl-ACP as the acyl donor. Is involved in the biosynthesis of lipid A, a phosphorylated glycolipid that anchors the lipopolysaccharide to the outer membrane of the cell. This chain is UDP-3-O-(3-hydroxymyristoyl)glucosamine N-acyltransferase, found in Escherichia coli O157:H7.